The following is a 463-amino-acid chain: Asparagine--tRNA ligase (463 aa).

Belongs to the class-II aminoacyl-tRNA synthetase family. Homodimer.

Its subcellular location is the cytoplasm. It catalyses the reaction tRNA(Asn) + L-asparagine + ATP = L-asparaginyl-tRNA(Asn) + AMP + diphosphate + H(+). This Clostridium tetani (strain Massachusetts / E88) protein is Asparagine--tRNA ligase.